Here is a 291-residue protein sequence, read N- to C-terminus: Nucleotide-binding protein LJ_0866 (291 aa).

13–20 (GMSGAGKT) contributes to the ATP binding site. 63–66 (DLRV) serves as a coordination point for GTP.

Belongs to the RapZ-like family.

Functionally, displays ATPase and GTPase activities. This chain is Nucleotide-binding protein LJ_0866, found in Lactobacillus johnsonii (strain CNCM I-12250 / La1 / NCC 533).